The primary structure comprises 156 residues: Small ribosomal subunit protein uS7 (156 aa).

This sequence belongs to the universal ribosomal protein uS7 family. Part of the 30S ribosomal subunit. Contacts proteins S9 and S11.

One of the primary rRNA binding proteins, it binds directly to 16S rRNA where it nucleates assembly of the head domain of the 30S subunit. Is located at the subunit interface close to the decoding center, probably blocks exit of the E-site tRNA. The polypeptide is Small ribosomal subunit protein uS7 (Alkaliphilus oremlandii (strain OhILAs) (Clostridium oremlandii (strain OhILAs))).